The following is a 113-amino-acid chain: Hydrogenase maturation factor HybF (113 aa).

Ni(2+) is bound by residues histidine 2 and glutamate 3. Zn(2+) contacts are provided by cysteine 73, cysteine 76, cysteine 89, and cysteine 92.

Belongs to the HypA/HybF family. HybF subfamily.

Functionally, involved in the maturation of [NiFe] hydrogenases. Required for nickel insertion into the metal center of the hydrogenase. The protein is Hydrogenase maturation factor HybF of Escherichia coli O157:H7.